The primary structure comprises 241 residues: Sugar fermentation stimulation protein homolog (241 aa).

It belongs to the SfsA family.

The sequence is that of Sugar fermentation stimulation protein homolog from Hahella chejuensis (strain KCTC 2396).